Here is a 961-residue protein sequence, read N- to C-terminus: DNA repair endonuclease XPF (961 aa).

Disordered stretches follow at residues 1–27 (MADS…SADT), 451–485 (NYAK…PPLA), and 674–693 (PTDE…QATK). A compositionally biased stretch (basic and acidic residues) spans 13-22 (TENERPKEVE). Residues 458–469 (TRSAPPKNVSSN) show a composition bias toward polar residues. The ERCC4 domain occupies 697-777 (KVIVDMREFR…KPILLIEFDQ (81 aa)).

The protein belongs to the XPF family. Heterodimer. Interacts with hdm.

The protein localises to the nucleus. Functionally, implicated in recombination events during meiosis, mostly in meiotic exchange. May directly resolve Holliday junctions within recombination intermediates leading to DNA exchange. Also required for the repair of mismatches within meiotic heteroduplex DNA and for nucleotide excision repair. In Drosophila melanogaster (Fruit fly), this protein is DNA repair endonuclease XPF (mei-9).